Consider the following 255-residue polypeptide: Protein DAL82 (255 aa).

A disordered region spans residues Pro87 to Thr149. The span at Pro128–Ser138 shows a compositional bias: basic and acidic residues.

Functionally, positive regulator of allophanate-induced genes in S.cerevisiae. In Saccharomyces cerevisiae (strain ATCC 204508 / S288c) (Baker's yeast), this protein is Protein DAL82 (DAL82).